Here is a 515-residue protein sequence, read N- to C-terminus: Maturase K (515 aa).

It belongs to the intron maturase 2 family. MatK subfamily.

It localises to the plastid. The protein resides in the chloroplast. In terms of biological role, usually encoded in the trnK tRNA gene intron. Probably assists in splicing its own and other chloroplast group II introns. This is Maturase K from Pinus halepensis (Aleppo pine).